A 994-amino-acid polypeptide reads, in one-letter code: Glycine dehydrogenase (decarboxylating) (994 aa).

A disordered region spans residues 1–20 (MTDHAENRCGLEGPRPFSSR). K716 carries the post-translational modification N6-(pyridoxal phosphate)lysine.

The protein belongs to the GcvP family. The glycine cleavage system is composed of four proteins: P, T, L and H. Pyridoxal 5'-phosphate is required as a cofactor.

The enzyme catalyses N(6)-[(R)-lipoyl]-L-lysyl-[glycine-cleavage complex H protein] + glycine + H(+) = N(6)-[(R)-S(8)-aminomethyldihydrolipoyl]-L-lysyl-[glycine-cleavage complex H protein] + CO2. In terms of biological role, the glycine cleavage system catalyzes the degradation of glycine. The P protein binds the alpha-amino group of glycine through its pyridoxal phosphate cofactor; CO(2) is released and the remaining methylamine moiety is then transferred to the lipoamide cofactor of the H protein. This chain is Glycine dehydrogenase (decarboxylating), found in Cutibacterium acnes (strain DSM 16379 / KPA171202) (Propionibacterium acnes).